A 622-amino-acid polypeptide reads, in one-letter code: Probable potassium transport system protein Kup (622 aa).

12 helical membrane-spanning segments follow: residues 7 to 27 (LAIG…LYAF), 44 to 64 (VLGV…IQYV), 95 to 115 (GWLV…DSMI), 133 to 153 (PELQ…LFVL), 165 to 185 (FAPV…ISIV), 199 to 219 (AVLF…SVVL), 243 to 263 (WFGF…AMIV), 290 to 310 (LVIL…SGAF), 338 to 358 (IYIP…VLTF), 370 to 390 (IAVT…LVGV), 395 to 415 (WYYA…YFAA), and 422 to 442 (DGGW…TTWA).

It belongs to the HAK/KUP transporter (TC 2.A.72) family.

It is found in the cell inner membrane. The catalysed reaction is K(+)(in) + H(+)(in) = K(+)(out) + H(+)(out). Its function is as follows. Transport of potassium into the cell. Likely operates as a K(+):H(+) symporter. This Erythrobacter litoralis (strain HTCC2594) protein is Probable potassium transport system protein Kup.